A 200-amino-acid polypeptide reads, in one-letter code: uncharacterized protein (200 aa).

Disordered stretches follow at residues 1-27 (MTDTRREQEKDERRKLQEQSRQNEAET), 42-79 (IPKEAKGNEPLLENYKSGLQETRKELETTPDATKSTNA), and 169-200 (HGRAGIVRNPQAAQHQRQRQMEKTGAGREHGR). The segment covering 187-200 (RQMEKTGAGREHGR) has biased composition (basic and acidic residues).

This is an uncharacterized protein from Shigella flexneri.